Consider the following 254-residue polypeptide: uncharacterized protein (254 aa).

Residues Val-7 and Asn-85 each contribute to the NADP(+) site. Ser-136 functions as the Proton donor in the catalytic mechanism. Residues Tyr-150, Lys-154, Val-181, and Thr-183 each coordinate NADP(+). Tyr-150 acts as the Proton acceptor in catalysis. The active-site Lowers pKa of active site Tyr is Lys-154.

It belongs to the short-chain dehydrogenases/reductases (SDR) family.

This is an uncharacterized protein from Saccharomyces cerevisiae (strain ATCC 204508 / S288c) (Baker's yeast).